We begin with the raw amino-acid sequence, 301 residues long: Ornithine carbamoyltransferase (301 aa).

Carbamoyl phosphate is bound by residues Ser47–Thr50, Gln74, Arg98, and His125–Gln128. L-ornithine-binding positions include Asn156, Asp220, and Ser224–Met225. Carbamoyl phosphate contacts are provided by residues Cys260 to Leu261 and Arg288.

The protein belongs to the aspartate/ornithine carbamoyltransferase superfamily. OTCase family.

The protein resides in the cytoplasm. The catalysed reaction is carbamoyl phosphate + L-ornithine = L-citrulline + phosphate + H(+). The protein operates within amino-acid biosynthesis; L-arginine biosynthesis; L-arginine from L-ornithine and carbamoyl phosphate: step 1/3. Its function is as follows. Reversibly catalyzes the transfer of the carbamoyl group from carbamoyl phosphate (CP) to the N(epsilon) atom of ornithine (ORN) to produce L-citrulline. This is Ornithine carbamoyltransferase from Methanobrevibacter smithii (strain ATCC 35061 / DSM 861 / OCM 144 / PS).